Here is a 208-residue protein sequence, read N- to C-terminus: Pyrrolidone-carboxylate peptidase (208 aa).

Residues E79, C142, and H166 contribute to the active site.

It belongs to the peptidase C15 family. As to quaternary structure, homotetramer made of two disulfide-linked dimers.

It localises to the cytoplasm. The enzyme catalyses Release of an N-terminal pyroglutamyl group from a polypeptide, the second amino acid generally not being Pro.. Removes 5-oxoproline from various penultimate amino acid residues except L-proline. This is Pyrrolidone-carboxylate peptidase (pcp) from Pyrococcus furiosus (strain ATCC 43587 / DSM 3638 / JCM 8422 / Vc1).